Here is a 137-residue protein sequence, read N- to C-terminus: Large ribosomal subunit protein uL16c (137 aa).

The tract at residues 1 to 21 (MLSPKKTKYRKQHRGRMKGKA) is disordered.

The protein belongs to the universal ribosomal protein uL16 family. As to quaternary structure, part of the 50S ribosomal subunit.

It localises to the plastid. The protein resides in the chloroplast. This Oedogonium cardiacum (Filamentous green alga) protein is Large ribosomal subunit protein uL16c.